The primary structure comprises 393 residues: Phosphoglycerate kinase (393 aa).

Substrate is bound by residues 21 to 23 (DLN), arginine 36, 59 to 62 (HLGR), arginine 113, and arginine 146. ATP is bound by residues lysine 197, glutamate 319, and 345–348 (GGDT).

It belongs to the phosphoglycerate kinase family. Monomer.

The protein localises to the cytoplasm. The catalysed reaction is (2R)-3-phosphoglycerate + ATP = (2R)-3-phospho-glyceroyl phosphate + ADP. It participates in carbohydrate degradation; glycolysis; pyruvate from D-glyceraldehyde 3-phosphate: step 2/5. This is Phosphoglycerate kinase from Nitratidesulfovibrio vulgaris (strain DP4) (Desulfovibrio vulgaris).